A 192-amino-acid polypeptide reads, in one-letter code: Elongation factor P (192 aa).

Positions 133–157 (EVTETTPGVKGDTAQGGDKPATLES) are disordered.

The protein belongs to the elongation factor P family.

It is found in the cytoplasm. It participates in protein biosynthesis; polypeptide chain elongation. Involved in peptide bond synthesis. Stimulates efficient translation and peptide-bond synthesis on native or reconstituted 70S ribosomes in vitro. Probably functions indirectly by altering the affinity of the ribosome for aminoacyl-tRNA, thus increasing their reactivity as acceptors for peptidyl transferase. The sequence is that of Elongation factor P from Salinibacter ruber (strain DSM 13855 / M31).